The primary structure comprises 500 residues: MSTANQKPTESVSLNAFKQPKAFYLIFSIELWERFGYYGLQGIMAVYLVKQLGMSEADSITLFSSFSALVYGLVAIGGWLGDKVLGTKRVIMLGAIVLAIGYALVAWSGHDAGIVYMGMAAIAVGNGLFKANPSSLLSTCYEKNDPRLDGAFTMYYMSVNIGSFFSMIATPWLAAKYGWSVAFALSVVGLLITIVNFAFCQRWVKQYGSKPDFEPINYRNLLLTIIGVVALIAIATWLLHNQEVARMALGVVAFGIVVIFGKEAFAMKGAARRKMIVAFILMLEAIIFFVLYSQMPTSLNFFAIRNVEHSILGLAVEPEQYQALNPFWIIIGSPILAAIYNKMGDTLPMPTKFAIGMVMCSGAFLILPLGAKFASDAGIVSVSWLVASYGLQSIGELMISGLGLAMVAQLVPQRLMGFIMGSWFLTTAGANLIGGYVAGMMAVPDNVTDPLMSLEVYGRVFLQIGVATAVIAVLMLLTAPKLHRMTQDDAADKAAKAAVA.

Residues 1-21 (MSTANQKPTESVSLNAFKQPK) lie on the Cytoplasmic side of the membrane. A helical transmembrane segment spans residues 22-44 (AFYLIFSIELWERFGYYGLQGIM). Topologically, residues 45–59 (AVYLVKQLGMSEADS) are periplasmic. A helical transmembrane segment spans residues 60–80 (ITLFSSFSALVYGLVAIGGWL). Residues 81-89 (GDKVLGTKR) are Cytoplasmic-facing. Residues 90–110 (VIMLGAIVLAIGYALVAWSGH) traverse the membrane as a helical segment. Residue D111 is a topological domain, periplasmic. A helical transmembrane segment spans residues 112–132 (AGIVYMGMAAIAVGNGLFKAN). Over 133-153 (PSSLLSTCYEKNDPRLDGAFT) the chain is Cytoplasmic. A helical membrane pass occupies residues 154-174 (MYYMSVNIGSFFSMIATPWLA). Residues 175-178 (AKYG) lie on the Periplasmic side of the membrane. Residues 179–199 (WSVAFALSVVGLLITIVNFAF) traverse the membrane as a helical segment. Residues 200-219 (CQRWVKQYGSKPDFEPINYR) are Cytoplasmic-facing. A helical transmembrane segment spans residues 220 to 240 (NLLLTIIGVVALIAIATWLLH). Over 241–246 (NQEVAR) the chain is Periplasmic. A helical transmembrane segment spans residues 247–267 (MALGVVAFGIVVIFGKEAFAM). Over 268–274 (KGAARRK) the chain is Cytoplasmic. Residues 275–295 (MIVAFILMLEAIIFFVLYSQM) traverse the membrane as a helical segment. Residues 296-320 (PTSLNFFAIRNVEHSILGLAVEPEQ) lie on the Periplasmic side of the membrane. A helical transmembrane segment spans residues 321–341 (YQALNPFWIIIGSPILAAIYN). Residues 342–352 (KMGDTLPMPTK) are Cytoplasmic-facing. Residues 353 to 373 (FAIGMVMCSGAFLILPLGAKF) traverse the membrane as a helical segment. Residues 374-378 (ASDAG) are Periplasmic-facing. The helical transmembrane segment at 379 to 399 (IVSVSWLVASYGLQSIGELMI) threads the bilayer. At 400–414 (SGLGLAMVAQLVPQR) the chain is on the cytoplasmic side. A helical membrane pass occupies residues 415–435 (LMGFIMGSWFLTTAGANLIGG). Residues 436–459 (YVAGMMAVPDNVTDPLMSLEVYGR) are Periplasmic-facing. A helical membrane pass occupies residues 460-480 (VFLQIGVATAVIAVLMLLTAP). Topologically, residues 481–500 (KLHRMTQDDAADKAAKAAVA) are cytoplasmic.

This sequence belongs to the major facilitator superfamily. Proton-dependent oligopeptide transporter (POT/PTR) (TC 2.A.17) family. DtpA subfamily. In terms of assembly, monomer. Has a crown-like structure with a diameter of 8 nm and a central density.

It is found in the cell inner membrane. Proton-dependent permease that transports di- and tripeptides as well as structurally related peptidomimetics such as aminocephalosporins into the cell. Has a clear preference for dipeptides and tripeptides composed of L-amino acids, and discriminates dipeptides on the basis of the position of charges within the substrate. The protein is Dipeptide and tripeptide permease A (dtpA) of Escherichia coli (strain K12).